The chain runs to 456 residues: 3-isopropylmalate dehydratase large subunit (456 aa).

[4Fe-4S] cluster-binding residues include Cys-336, Cys-396, and Cys-399.

The protein belongs to the aconitase/IPM isomerase family. LeuC type 1 subfamily. As to quaternary structure, heterodimer of LeuC and LeuD. [4Fe-4S] cluster is required as a cofactor.

It carries out the reaction (2R,3S)-3-isopropylmalate = (2S)-2-isopropylmalate. It functions in the pathway amino-acid biosynthesis; L-leucine biosynthesis; L-leucine from 3-methyl-2-oxobutanoate: step 2/4. Catalyzes the isomerization between 2-isopropylmalate and 3-isopropylmalate, via the formation of 2-isopropylmaleate. The chain is 3-isopropylmalate dehydratase large subunit from Staphylococcus haemolyticus (strain JCSC1435).